A 427-amino-acid chain; its full sequence is Flotillin-1 (427 aa).

Residues Ser-19, Ser-163, and Ser-385 each carry the phosphoserine modification. Thr-387 carries the post-translational modification Phosphothreonine.

The protein belongs to the band 7/mec-2 family. Flotillin subfamily. Heterooligomeric complex of flotillin-1 and flotillin-2 and caveolin-1 and caveolin-2. Interacts with ECPAS.

The protein localises to the cell membrane. It localises to the endosome. The protein resides in the membrane. It is found in the caveola. Its subcellular location is the melanosome. The protein localises to the membrane raft. Functionally, may act as a scaffolding protein within caveolar membranes, functionally participating in formation of caveolae or caveolae-like vesicles. The chain is Flotillin-1 (FLOT1) from Pongo abelii (Sumatran orangutan).